A 124-amino-acid polypeptide reads, in one-letter code: Small ribosomal subunit protein uS12 (124 aa).

Asp89 carries the post-translational modification 3-methylthioaspartic acid.

Belongs to the universal ribosomal protein uS12 family. Part of the 30S ribosomal subunit. Contacts proteins S8 and S17. May interact with IF1 in the 30S initiation complex.

In terms of biological role, with S4 and S5 plays an important role in translational accuracy. Its function is as follows. Interacts with and stabilizes bases of the 16S rRNA that are involved in tRNA selection in the A site and with the mRNA backbone. Located at the interface of the 30S and 50S subunits, it traverses the body of the 30S subunit contacting proteins on the other side and probably holding the rRNA structure together. The combined cluster of proteins S8, S12 and S17 appears to hold together the shoulder and platform of the 30S subunit. This chain is Small ribosomal subunit protein uS12, found in Campylobacter hominis (strain ATCC BAA-381 / DSM 21671 / CCUG 45161 / LMG 19568 / NCTC 13146 / CH001A).